The following is a 261-amino-acid chain: MYTDLKDKVVVITGGSTGLGRAMAVRFGQEEAKVVINYYNNEEEALDAKKEVEEAGGQAIIVQGDVTKEEDVVNLVQTAIKEFGTLDVMINNAGVENPVPSHELSLDNWNKVIDTNLTGAFLGSREAIKYFVENDIKGNVINMSSVHEMIPWPLFVHYAASKGGMKQMTETLALEYAPKGIRVNNIGPGAMNTPINAEKFADPVQRADVESMIPMGYIGKPEEVAAVAAFLASSQASYVTGITLFADGGMTKYPSFQTGRG.

An NAD(+)-binding site is contributed by 11–35 (VITGGSTGLGRAMAVRFGQEEAKVV). Residue serine 145 coordinates substrate. Tyrosine 158 acts as the Proton acceptor in catalysis.

This sequence belongs to the short-chain dehydrogenases/reductases (SDR) family. Homotetramer.

The catalysed reaction is D-glucose + NAD(+) = D-glucono-1,5-lactone + NADH + H(+). It catalyses the reaction D-glucose + NADP(+) = D-glucono-1,5-lactone + NADPH + H(+). The sequence is that of Glucose 1-dehydrogenase 3 (gdhIII) from Priestia megaterium (Bacillus megaterium).